The following is a 535-amino-acid chain: Probable cytochrome P450 12b2, mitochondrial (535 aa).

Residue cysteine 479 participates in heme binding.

This sequence belongs to the cytochrome P450 family. Requires heme as cofactor.

Its subcellular location is the mitochondrion membrane. The sequence is that of Probable cytochrome P450 12b2, mitochondrial (Cyp12b2) from Drosophila melanogaster (Fruit fly).